A 297-amino-acid polypeptide reads, in one-letter code: Phosphoribosylaminoimidazole-succinocarboxamide synthase (297 aa).

The protein belongs to the SAICAR synthetase family.

It carries out the reaction 5-amino-1-(5-phospho-D-ribosyl)imidazole-4-carboxylate + L-aspartate + ATP = (2S)-2-[5-amino-1-(5-phospho-beta-D-ribosyl)imidazole-4-carboxamido]succinate + ADP + phosphate + 2 H(+). Its pathway is purine metabolism; IMP biosynthesis via de novo pathway; 5-amino-1-(5-phospho-D-ribosyl)imidazole-4-carboxamide from 5-amino-1-(5-phospho-D-ribosyl)imidazole-4-carboxylate: step 1/2. The protein is Phosphoribosylaminoimidazole-succinocarboxamide synthase of Mycobacterium marinum (strain ATCC BAA-535 / M).